The sequence spans 764 residues: Nucleolar complex-associated protein 2 (764 aa).

The stretch at 3-69 forms a coiled coil; sequence AKDDKKRVKK…EEELKRLQEK (67 aa). Disordered stretches follow at residues 23–67, 89–113, 627–646, and 651–726; these read ELNN…KRLQ, ATEIEDDADVEPDTDLEDTEKEGDD, AVFGKNAPSSDDEDDEDRME, and AFNS…EDDA. Basic and acidic residues predominate over residues 30–41; sequence IDAHDIVMEQKS. The span at 42–51 shows a compositional bias: basic residues; that stretch reads DKKRGKKVKS. Over residues 52–67 the composition is skewed to basic and acidic residues; it reads KKAEAEEHEEELKRLQ. A compositionally biased stretch (acidic residues) spans 90 to 113; that stretch reads TEIEDDADVEPDTDLEDTEKEGDD. Residues 661–672 show a composition bias toward basic and acidic residues; that stretch reads DSKEKEPEEEKT. The Nuclear localization signal 1 signature appears at 673-680; it reads KKKKRKRG. Residues 673–682 are compositionally biased toward basic residues; it reads KKKKRKRGGK. Positions 693-726 are enriched in acidic residues; sequence GLGEDDVVEDFVLSSDEEEEDLFDIGGDKDEDDA. A Nuclear localization signal 2 motif is present at residues 738–745; the sequence is SKKTKGTY.

It belongs to the NOC2 family. In terms of assembly, component of nucleolar complexes. Forms homodimers. Interacts with RBL and NOC3 in both the nucleolus and nucleoplasm. Binds to SWA2.

It localises to the nucleus. The protein localises to the nucleolus. The protein resides in the nucleoplasm. Functionally, together with SWA2, probably involved in pre-ribosome export from the nucleus to the cytoplasm. The protein is Nucleolar complex-associated protein 2 of Arabidopsis thaliana (Mouse-ear cress).